The primary structure comprises 441 residues: Xylose isomerase (441 aa).

Active-site residues include His-99 and Asp-102. Glu-230, Glu-266, His-269, Asp-294, Asp-305, Asp-307, and Asp-337 together coordinate Mg(2+).

The protein belongs to the xylose isomerase family. Homotetramer. Requires Mg(2+) as cofactor.

Its subcellular location is the cytoplasm. The catalysed reaction is alpha-D-xylose = alpha-D-xylulofuranose. Functionally, exhibits xylose isomerase activity. This is Xylose isomerase (xylA) from Bacillus sp. (strain LW2).